Reading from the N-terminus, the 152-residue chain is Ubiquitin-conjugating enzyme E2 2 (152 aa).

The 147-residue stretch at 4–150 folds into the UBC core domain; it reads PARKRLMRDF…VREVVEQSWT (147 aa). Cysteine 88 acts as the Glycyl thioester intermediate in catalysis.

It belongs to the ubiquitin-conjugating enzyme family. Expressed in all tissues examined. Lower levels found in leaves.

The enzyme catalyses S-ubiquitinyl-[E1 ubiquitin-activating enzyme]-L-cysteine + [E2 ubiquitin-conjugating enzyme]-L-cysteine = [E1 ubiquitin-activating enzyme]-L-cysteine + S-ubiquitinyl-[E2 ubiquitin-conjugating enzyme]-L-cysteine.. Its pathway is protein modification; protein ubiquitination. Functionally, accepts the ubiquitin from the E1 complex and catalyzes its covalent attachment to other proteins. This is Ubiquitin-conjugating enzyme E2 2 (UBC2) from Arabidopsis thaliana (Mouse-ear cress).